The sequence spans 464 residues: Soluble pyridine nucleotide transhydrogenase (464 aa).

35–44 (DSRRQVGGNC) lines the FAD pocket.

It belongs to the class-I pyridine nucleotide-disulfide oxidoreductase family. The cofactor is FAD.

It localises to the cytoplasm. It catalyses the reaction NAD(+) + NADPH = NADH + NADP(+). In terms of biological role, conversion of NADPH, generated by peripheral catabolic pathways, to NADH, which can enter the respiratory chain for energy generation. The sequence is that of Soluble pyridine nucleotide transhydrogenase from Pseudomonas fluorescens (strain Pf0-1).